A 430-amino-acid chain; its full sequence is 26S protease regulatory subunit 6A (430 aa).

Gly-218–Thr-225 serves as a coordination point for ATP.

It belongs to the AAA ATPase family. In terms of assembly, component of the 19S proteasome regulatory particle complex. The 26S proteasome consists of a 20S core particle (CP) and two 19S regulatory subunits (RP). The regulatory particle is made of a lid composed of 9 subunits, a base containing 6 ATPases including the PSMC3 homolog rpt-5 and few additional components.

The protein resides in the cytoplasm. The protein localises to the nucleus. Component of the 26S proteasome, a multiprotein complex involved in the ATP-dependent degradation of ubiquitinated proteins. This complex plays a key role in the maintenance of protein homeostasis by removing misfolded or damaged proteins, which could impair cellular functions, and by removing proteins whose functions are no longer required. Therefore, the proteasome participates in numerous cellular processes, including cell cycle progression, apoptosis, or DNA damage repair. Belongs to the heterohexameric ring of AAA (ATPases associated with diverse cellular activities) proteins that unfolds ubiquitinated target proteins that are concurrently translocated into a proteolytic chamber and degraded into peptides. The sequence is that of 26S protease regulatory subunit 6A from Caenorhabditis elegans.